Consider the following 229-residue polypeptide: 2-C-methyl-D-erythritol 4-phosphate cytidylyltransferase (229 aa).

The protein belongs to the IspD/TarI cytidylyltransferase family. IspD subfamily.

It catalyses the reaction 2-C-methyl-D-erythritol 4-phosphate + CTP + H(+) = 4-CDP-2-C-methyl-D-erythritol + diphosphate. The protein operates within isoprenoid biosynthesis; isopentenyl diphosphate biosynthesis via DXP pathway; isopentenyl diphosphate from 1-deoxy-D-xylulose 5-phosphate: step 2/6. In terms of biological role, catalyzes the formation of 4-diphosphocytidyl-2-C-methyl-D-erythritol from CTP and 2-C-methyl-D-erythritol 4-phosphate (MEP). In Clostridium botulinum (strain Okra / Type B1), this protein is 2-C-methyl-D-erythritol 4-phosphate cytidylyltransferase.